The primary structure comprises 707 residues: MMRNLAQQVGLFVCRISSGTSAWNSVISASYFSAGITRYSRSTVYRGYKAWQNLLDSEKRRWQRACAKYQGLVTSLEKRLCDMHQSYSTGDEKGMIIYEDYIYFQDNGCICRYKPNTGEDSLEVLLISEDLGLGDYEIQKIRVSPKQKFMAVTLKGYEREESTCVVVKLDNGPQVTHCIENVFSCEWATDRMLLHTSQVNVQCRQVFATDFSDANGAAQLVYTENDPRFFVDLYCTRDKRFITINSNSKSTSEVRLIDNRCPFEPPVLVQKRIAGVIYYIEHSNGCLYMLRRHGEAAEYKILKAAVSSGMKHWEPVYEVQERTKLVDMEMLKDHCLLFLKNHNQLSLEVIGLPSGAVLQSIKLPAWACALELDHQAEYGAGTVGFSLSSPVHPPVHFEYSLRKKQLSVDTNHSSDGIHQFHTLRLEAKSKDGTSVPLTLLYKDSEKQMRQRPLLIHVYGAYGMDLNMSFKVEKRMLVEEGWLLAYCHVRGGGELGCNWHSEGVLDKKLNGLEDLGSCISHLHGLGYSQPHYSAVEAASAGGVLAGALCNSAPRLFRAVVLEAPFLDVLNTMMNVSLPLTIEEQEEWGNPLSDEKYHRYIKSYCPYQNITPQNYPCVRITAYENDQRVPIQGLLGYITRLRKAARDYCHESGTSESRIPHIYLDVHPGGSHCDSLSWEESLRKVATQLAFLHMELKLDIPRRCKGSTQ.

Residues S538, D624, and H670 each act as charge relay system in the active site.

It belongs to the peptidase S9A family. As to quaternary structure, homodimer.

It is found in the cytoplasm. It localises to the cytosol. Functionally, serine peptidase whose precise substrate specificity remains unclear. Does not cleave peptides after a arginine or lysine residue. Regulates trans-Golgi network morphology and sorting by regulating the membrane binding of the AP-1 complex. May play a role in the regulation of synaptic vesicle exocytosis. The polypeptide is Prolyl endopeptidase-like (prepl) (Xenopus laevis (African clawed frog)).